We begin with the raw amino-acid sequence, 363 residues long: Phosphate acyltransferase (363 aa).

Residues 326 to 363 (ADSHPSKVNAGENAPPLASASNPSPEALPVGSLDRVEG) are disordered. The span at 337-354 (ENAPPLASASNPSPEALP) shows a compositional bias: low complexity.

It belongs to the PlsX family. Homodimer. Probably interacts with PlsY.

It is found in the cytoplasm. It catalyses the reaction a fatty acyl-[ACP] + phosphate = an acyl phosphate + holo-[ACP]. The protein operates within lipid metabolism; phospholipid metabolism. Catalyzes the reversible formation of acyl-phosphate (acyl-PO(4)) from acyl-[acyl-carrier-protein] (acyl-ACP). This enzyme utilizes acyl-ACP as fatty acyl donor, but not acyl-CoA. In Synechococcus sp. (strain JA-3-3Ab) (Cyanobacteria bacterium Yellowstone A-Prime), this protein is Phosphate acyltransferase.